The following is a 363-amino-acid chain: Photosystem II protein D1 1 (363 aa).

The next 3 membrane-spanning stretches (helical) occupy residues 32-49, 121-136, and 145-159; these read YVGW…VSAI, HFLI…QWEL, and WIAM…AATA. Residue His121 participates in chlorophyll a binding. Position 129 (Tyr129) interacts with pheophytin a. Residues Glu173 and Glu192 each contribute to the [CaMn4O5] cluster site. A helical transmembrane segment spans residues 200–221; the sequence is FHMLGVVGVFGGAFLSAMHGSL. Residue His201 coordinates chlorophyll a. A quinone is bound by residues His218 and 268–269; that span reads AF. His218 lines the Fe cation pocket. His276 contacts Fe cation. The helical transmembrane segment at 278-292 threads the bilayer; sequence LLAVLPTIGIWFAAL. [CaMn4O5] cluster is bound by residues His336 and Ala348. Positions 349–363 are excised as a propeptide; the sequence is STESKEIPTIPIMTS.

Belongs to the reaction center PufL/M/PsbA/D family. PSII is composed of 1 copy each of membrane proteins PsbA, PsbB, PsbC, PsbD, PsbE, PsbF, PsbH, PsbI, PsbJ, PsbK, PsbL, PsbM, PsbT, PsbX, PsbY, PsbZ, Psb30/Ycf12, peripheral proteins PsbO, CyanoQ (PsbQ), PsbU, PsbV and a large number of cofactors. It forms dimeric complexes. The D1/D2 heterodimer binds P680, chlorophylls that are the primary electron donor of PSII, and subsequent electron acceptors. It shares a non-heme iron and each subunit binds pheophytin, quinone, additional chlorophylls, carotenoids and lipids. D1 provides most of the ligands for the Mn4-Ca-O5 cluster of the oxygen-evolving complex (OEC). There is also a Cl(-1) ion associated with D1 and D2, which is required for oxygen evolution. The PSII complex binds additional chlorophylls, carotenoids and specific lipids. is required as a cofactor. In terms of processing, tyr-164 forms a radical intermediate that is referred to as redox-active TyrZ, YZ or Y-Z. Post-translationally, C-terminally processed by CtpA; processing is essential to allow assembly of the oxygen-evolving complex and thus photosynthetic growth.

It localises to the cellular thylakoid membrane. It catalyses the reaction 2 a plastoquinone + 4 hnu + 2 H2O = 2 a plastoquinol + O2. In terms of biological role, photosystem II (PSII) is a light-driven water:plastoquinone oxidoreductase that uses light energy to abstract electrons from H(2)O, generating O(2) and a proton gradient subsequently used for ATP formation. It consists of a core antenna complex that captures photons, and an electron transfer chain that converts photonic excitation into a charge separation. The D1/D2 (PsbA/PsbD) reaction center heterodimer binds P680, the primary electron donor of PSII as well as several subsequent electron acceptors. This Acaryochloris marina (strain MBIC 11017) protein is Photosystem II protein D1 1.